The chain runs to 610 residues: ESX-5 secretion system protein EccA5 (610 aa).

357 to 364 (GPPGTGKT) is a binding site for ATP.

Belongs to the CbxX/CfxQ family. Part of the ESX-5 / type VII secretion system (T7SS), which is composed of cytosolic and membrane components.

The protein localises to the cytoplasm. Its function is as follows. Part of the ESX-5 specialized secretion system, which is responsible for the secretion of EsxN and a number of PE_PGRS and PPE proteins. EccA5 exhibits ATPase activity and may provide energy for the export of ESX-5 substrates. This is ESX-5 secretion system protein EccA5 from Mycobacterium marinum (strain ATCC BAA-535 / M).